The primary structure comprises 339 residues: Small ribosomal subunit biogenesis GTPase RsgA (339 aa).

The CP-type G domain occupies 111–271 (MRGLLKPVAA…LIDSPGIREF (161 aa)). GTP is bound by residues 159 to 162 (NKAD) and 213 to 221 (GQSGVGKSS). Positions 295, 300, 302, and 308 each coordinate Zn(2+).

The protein belongs to the TRAFAC class YlqF/YawG GTPase family. RsgA subfamily. In terms of assembly, monomer. Associates with 30S ribosomal subunit, binds 16S rRNA. Zn(2+) is required as a cofactor.

The protein resides in the cytoplasm. One of several proteins that assist in the late maturation steps of the functional core of the 30S ribosomal subunit. Helps release RbfA from mature subunits. May play a role in the assembly of ribosomal proteins into the subunit. Circularly permuted GTPase that catalyzes slow GTP hydrolysis, GTPase activity is stimulated by the 30S ribosomal subunit. The chain is Small ribosomal subunit biogenesis GTPase RsgA from Pseudomonas aeruginosa (strain UCBPP-PA14).